The chain runs to 157 residues: Crossover junction endodeoxyribonuclease RuvC (157 aa).

Catalysis depends on residues Asp7, Glu66, and Asp139. 3 residues coordinate Mg(2+): Asp7, Glu66, and Asp139.

It belongs to the RuvC family. As to quaternary structure, homodimer which binds Holliday junction (HJ) DNA. The HJ becomes 2-fold symmetrical on binding to RuvC with unstacked arms; it has a different conformation from HJ DNA in complex with RuvA. In the full resolvosome a probable DNA-RuvA(4)-RuvB(12)-RuvC(2) complex forms which resolves the HJ. The cofactor is Mg(2+).

It is found in the cytoplasm. The enzyme catalyses Endonucleolytic cleavage at a junction such as a reciprocal single-stranded crossover between two homologous DNA duplexes (Holliday junction).. Functionally, the RuvA-RuvB-RuvC complex processes Holliday junction (HJ) DNA during genetic recombination and DNA repair. Endonuclease that resolves HJ intermediates. Cleaves cruciform DNA by making single-stranded nicks across the HJ at symmetrical positions within the homologous arms, yielding a 5'-phosphate and a 3'-hydroxyl group; requires a central core of homology in the junction. The consensus cleavage sequence is 5'-(A/T)TT(C/G)-3'. Cleavage occurs on the 3'-side of the TT dinucleotide at the point of strand exchange. HJ branch migration catalyzed by RuvA-RuvB allows RuvC to scan DNA until it finds its consensus sequence, where it cleaves and resolves the cruciform DNA. This chain is Crossover junction endodeoxyribonuclease RuvC, found in Campylobacter concisus (strain 13826).